We begin with the raw amino-acid sequence, 414 residues long: Serine/arginine-rich splicing factor SR45 (414 aa).

Disordered stretches follow at residues 1 to 95 (MAKP…KAVQ) and 175 to 414 (LPPR…PRKT). Low complexity-rich tracts occupy residues 10-34 (SPSV…SRSI) and 42-60 (RSLS…GSRS). Residues 62–69 (PRRGKSPA) carry the Nuclear localization signal 1 motif. S77 is subject to Phosphoserine. The region spanning 98-176 (LVLHVDSLSR…KVVKATFTLP (79 aa)) is the RRM domain. Low complexity predominate over residues 176-191 (PPRQKVSSPPKPVSAA). Over residues 205 to 220 (DAEKDGGPRRPRETSP) the composition is skewed to basic and acidic residues. Positions 218–219 (TS) are required for isoform 1 function in petal development. Residues 228–243 (PRRRSPLPRRGLSPRR) are compositionally biased toward basic residues. The Nuclear localization signal 2 motif lies at 229-236 (RRRSPLPR). The residue at position 256 (S256) is a Phosphoserine. 3 consecutive short sequence motifs (nuclear localization signal) follow at residues 284–291 (PRRYRSPP), 318–325 (PRRLRSPP), and 338–345 (IRRPGRSR). Basic residues-rich tracts occupy residues 285–343 (RRYR…RPGR) and 352–363 (RKGRGPAGRRGR). Residues 364–373 (SSSYSSSPSP) show a composition bias toward low complexity. Residues 373–380 (PRRIPRKI) carry the Nuclear localization signal 6 motif. Positions 375–394 (RIPRKISRSRSPKRPLRGKR) are enriched in basic residues. Pro residues predominate over residues 404 to 414 (SPPPPPPPRKT).

Belongs to the splicing factor SR family. SR45 subfamily. Component of the spliceosome. Interacts with AFC2, U2AF35A, U2AF35B, RNU1, SCL33 and SKIP. The interaction with AFC2 depends on phosphorylation status. Interaction with RNU1 defines initial 5' splice sites and interaction with U2AF35B 3' splice sites in the early stage of spliceosome assembly. Post-translationally, phosphorylated by AFC2. The phosphorylation status regulates intranuclear distribution. As to expression, especially present in actively growing regions and dividing cells. Mostly expressed in roots (primary and secondary root meristem), shoot apical meristem (SAM), leaf primordia, pollen and inflorescence, and, to a lower extent, in leaves, vascular tissue, hydathode and fruits.

The protein localises to the nucleus speckle. It is found in the nucleus. Its subcellular location is the nucleoplasm. In terms of biological role, involved in 5' and 3' splicing site selection of introns, and may bridge the 5' and 3' components of the spliceosome. Isoform 1 is required during flower petal development and isoform 2 is involved in root growth. Negatively regulates glucose and abscisic acid (ABA) signaling during early seedling development. Involved in the RNA-directed DNA methylation pathway. Modulates KIN10 stability in response to sugars, probably through the splicing regulation of 5PTASE13, a protein implicated in the proteasomal degradation of KIN10. In Arabidopsis thaliana (Mouse-ear cress), this protein is Serine/arginine-rich splicing factor SR45.